A 627-amino-acid polypeptide reads, in one-letter code: Protein CER1-like 1 (627 aa).

The next 5 membrane-spanning stretches (helical) occupy residues 19 to 39, 48 to 68, 126 to 146, 186 to 206, and 328 to 348; these read FKYL…VTAV, LMIV…ISVS, GAIL…YWFH, LLFA…IVSI, and YLTC…TSAI. The Fatty acid hydroxylase domain maps to 138–272; sequence VEFLYYWFHR…MPIYDFIYGT (135 aa).

It belongs to the sterol desaturase family. In terms of tissue distribution, expressed in flowers and siliques. Not detected in pollen, pedicels and seeds.

The protein localises to the membrane. This Arabidopsis thaliana (Mouse-ear cress) protein is Protein CER1-like 1.